The primary structure comprises 202 residues: Probable GTP-binding protein EngB (202 aa).

Positions 26–200 constitute an EngB-type G domain; that stretch reads VSKEIAFTGS…KAQLDSWFSI (175 aa). Residues 34–41, 61–65, 79–82, 146–149, and 179–181 contribute to the GTP site; these read GSSNVGKS, GSTKT, DLPG, NKAD, and FSS. The Mg(2+) site is built by S41 and T63.

Belongs to the TRAFAC class TrmE-Era-EngA-EngB-Septin-like GTPase superfamily. EngB GTPase family. Mg(2+) is required as a cofactor.

Necessary for normal cell division and for the maintenance of normal septation. The sequence is that of Probable GTP-binding protein EngB from Baumannia cicadellinicola subsp. Homalodisca coagulata.